The following is a 195-amino-acid chain: uncharacterized protein (195 aa).

The segment at 86–158 (LPSEGGWTSG…PAPVSGEPPE (73 aa)) is disordered.

This is an uncharacterized protein from Homo sapiens (Human).